We begin with the raw amino-acid sequence, 254 residues long: Arginine/ornithine transport ATP-binding protein AotP (254 aa).

The region spanning 4–249 (LEVQDLHKRY…PQSDRLKQFL (246 aa)) is the ABC transporter domain. Residue 36–43 (GSSGSGKS) coordinates ATP.

It belongs to the ABC transporter superfamily.

It is found in the cell inner membrane. In terms of biological role, part of the arginine-inducible binding-protein-dependent transport system for arginine and ornithine. Probably responsible for energy coupling to the transport system. This is Arginine/ornithine transport ATP-binding protein AotP (aotP) from Pseudomonas aeruginosa (strain ATCC 15692 / DSM 22644 / CIP 104116 / JCM 14847 / LMG 12228 / 1C / PRS 101 / PAO1).